The primary structure comprises 85 residues: Protein 19.2 (85 aa).

The sequence is that of Protein 19.2 from Escherichia coli (Bacteriophage T7).